Reading from the N-terminus, the 317-residue chain is MAAAGDVILEDVPGSVNLFNTLQDQITKVTAHVQDLTQKVRSGIYNTDKGLSFLELKDQLLLFYLQDLTHLMLEKTNGKSIKGNPGILRLVELRTVLEKMRPIDQKLKYQIDKLVKAAVTGSLGENDPLRFKPNPQNLMSKLSEPDERESDSGEEGAEGGVAKKPQSKVKRYIPPRLAPVHYDDTEAEREHRIVERAKKLALSSSTIRELKEQYSDAPEEIREGRAYHMMRHDKEEQHRINHEESMMVRLNMTRKEKARKKRVLSMTSQLNSLTHFSDISALTGGEGRAEDMVPSMKKSKKGPKKSKKKKGFSRRRH.

2 disordered regions span residues 125 to 170 (ENDP…SKVK) and 280 to 317 (SALTGGEGRAEDMVPSMKKSKKGPKKSKKKKGFSRRRH). Over residues 146 to 157 (DERESDSGEEGA) the composition is skewed to acidic residues. Positions 297-317 (KKSKKGPKKSKKKKGFSRRRH) are enriched in basic residues.

The protein belongs to the SAS10 family. As to quaternary structure, part of the small subunit (SSU) processome, composed of more than 70 proteins and the RNA chaperone small nucleolar RNA (snoRNA) U3.

Its subcellular location is the nucleus. It localises to the nucleolus. It is found in the chromosome. The protein localises to the centromere. The protein resides in the cytoplasm. Its subcellular location is the cell projection. It localises to the axon. It is found in the dendrite. The protein localises to the filopodium. Part of the small subunit (SSU) processome, first precursor of the small eukaryotic ribosomal subunit. During the assembly of the SSU processome in the nucleolus, many ribosome biogenesis factors, an RNA chaperone and ribosomal proteins associate with the nascent pre-rRNA and work in concert to generate RNA folding, modifications, rearrangements and cleavage as well as targeted degradation of pre-ribosomal RNA by the RNA exosome. Its dissociation from the complex determines the transition from state pre-A1 to state pre-A1*. May inhibit mRNA translation. The protein is Neuroguidin-A (ngdn-a) of Xenopus laevis (African clawed frog).